The sequence spans 276 residues: Formamidopyrimidine-DNA glycosylase (276 aa).

P2 acts as the Schiff-base intermediate with DNA in catalysis. The active-site Proton donor is E3. Residue K59 is the Proton donor; for beta-elimination activity of the active site. Positions 93, 112, and 155 each coordinate DNA. The FPG-type zinc-finger motif lies at 240-274; sequence QVYNREGKPCPRCGDKIAKKKVGGRSSYYCPTCQK. The active-site Proton donor; for delta-elimination activity is R264.

The protein belongs to the FPG family. As to quaternary structure, monomer. It depends on Zn(2+) as a cofactor.

The enzyme catalyses Hydrolysis of DNA containing ring-opened 7-methylguanine residues, releasing 2,6-diamino-4-hydroxy-5-(N-methyl)formamidopyrimidine.. It carries out the reaction 2'-deoxyribonucleotide-(2'-deoxyribose 5'-phosphate)-2'-deoxyribonucleotide-DNA = a 3'-end 2'-deoxyribonucleotide-(2,3-dehydro-2,3-deoxyribose 5'-phosphate)-DNA + a 5'-end 5'-phospho-2'-deoxyribonucleoside-DNA + H(+). Involved in base excision repair of DNA damaged by oxidation or by mutagenic agents. Acts as a DNA glycosylase that recognizes and removes damaged bases. Has a preference for oxidized purines, such as 7,8-dihydro-8-oxoguanine (8-oxoG). Has AP (apurinic/apyrimidinic) lyase activity and introduces nicks in the DNA strand. Cleaves the DNA backbone by beta-delta elimination to generate a single-strand break at the site of the removed base with both 3'- and 5'-phosphates. The chain is Formamidopyrimidine-DNA glycosylase from Pelotomaculum thermopropionicum (strain DSM 13744 / JCM 10971 / SI).